The sequence spans 105 residues: Met repressor (105 aa).

This sequence belongs to the MetJ family. As to quaternary structure, homodimer.

It is found in the cytoplasm. Functionally, this regulatory protein, when combined with SAM (S-adenosylmethionine) represses the expression of the methionine regulon and of enzymes involved in SAM synthesis. The chain is Met repressor from Histophilus somni (strain 129Pt) (Haemophilus somnus).